The primary structure comprises 567 residues: Sensor histidine kinase MtrB (567 aa).

Residues 1 to 15 (MIFGSRRRIRGRRGR) are compositionally biased toward basic residues. Residues 1-20 (MIFGSRRRIRGRRGRSGPMT) are disordered. The next 2 helical transmembrane spans lie at 42–62 (VVALTLGLSLAVILALGFVLT) and 213–233 (GTMATGGLVLLVLLAGIALLV). One can recognise an HAMP domain in the interval 235 to 287 (RQVVVPVRSASRIAERFAEGHLSERMPVRGEDDMARLAVSFNDMAESLSRQIA). Positions 302–519 (DVSHELRTPL…CFRLTLPLVR (218 aa)) constitute a Histidine kinase domain. The residue at position 305 (H305) is a Phosphohistidine; by autocatalysis. Positions 526–567 (SPLPMKPIPQPVLQPVAQPNPQPMPPEYKERQRPREHAEWSG) are disordered. Pro residues predominate over residues 529 to 551 (PMKPIPQPVLQPVAQPNPQPMPP). Residues 552–567 (EYKERQRPREHAEWSG) show a composition bias toward basic and acidic residues.

It localises to the cell membrane. It catalyses the reaction ATP + protein L-histidine = ADP + protein N-phospho-L-histidine.. Functionally, member of the two-component regulatory system MtrA/MtrB. Seems to function as a membrane-associated protein kinase that phosphorylates MtrA in response to environmental signals. This chain is Sensor histidine kinase MtrB (mtrB), found in Mycobacterium bovis (strain ATCC BAA-935 / AF2122/97).